Here is a 378-residue protein sequence, read N- to C-terminus: Putative glutamate--cysteine ligase 2 (378 aa).

It belongs to the glutamate--cysteine ligase type 2 family. YbdK subfamily.

The catalysed reaction is L-cysteine + L-glutamate + ATP = gamma-L-glutamyl-L-cysteine + ADP + phosphate + H(+). In terms of biological role, ATP-dependent carboxylate-amine ligase which exhibits weak glutamate--cysteine ligase activity. This is Putative glutamate--cysteine ligase 2 from Salinispora tropica (strain ATCC BAA-916 / DSM 44818 / JCM 13857 / NBRC 105044 / CNB-440).